The primary structure comprises 827 residues: MLLCLSPAWLMKVPAPGQPGEAALLVSKAVSFHPGGLTFLDDFVPPRRATYFLAGLGLGPGRGREAAELARDLTCPTGASAELARLLEDRLLTRQLLAQQGGVAVPATLAFTYKPPGLLRGGDASLGLRLVELSGKEGQETLVKEEVEAFLRSEALGDILQVAVKLSGWRWRGRQAWRLHPRAELGAVVDTVLALLEKLEEEESVLVEAVYPPAQLPCSDGPSPGPGLAVRICAVVCRTQGDRPLLSKVVCGVGRGDRPLRHHNSLPRTLEVALAQCGLGEEAQVAAVRQRVKAAAEAALAAVLALEAGLSAEQRGGRRAHTDFLGVDFALTAAGGVLTPVALELNGGLCLEACGALEGLWAAPRLGPAADEAVAAPLVETMLRRSARCLMEGKQLLVVGAGGVSKKFVWEAARDYGLQLHLVESDPNHFASQLVQTFIHFDMTEHRRDEENARLLAELVRARGLKLDGCFSYWDDCLVLTALLCQELGLPCSSPAAMRLAKQKSLTQLHLLHHHGPPWPAPSLHAVPCCPLESEADVERAVHQVPLPGVMKLEFGAGAVGVRLVEDAPQCHEHFSRITRDLQGEADHPGIGLGWGNAMLLMEFVEGTEHDVDLVLFGGRLLAAFVSDNGPTRLPGFTETAACMPTGLAPEQEAQMVQAAFRCCLGCGLLDGVFNVELKLTGAGPRLIEINPRMGGFYLRDWILELYGVDLLLAAVMVACGLRPALPTRPRARGHLVGVMCLVSQHLQALSSTASRETLQALHDRGLLRLNLLEEALVPGEYEEPYCSVACAGPSPTEARLRLLGLCQGLGIDGPSYPVAHFLSHFK.

The region spanning 516–720 (GPPWPAPSLH…LLLAAVMVAC (205 aa)) is the ATP-grasp domain. ATP is bound at residue 542-611 (VHQVPLPGVM…MEFVEGTEHD (70 aa)). E677, E689, and N691 together coordinate Mg(2+). Positions 677, 689, and 691 each coordinate Mn(2+).

As to quaternary structure, homotetramer. It depends on Mg(2+) as a cofactor. Mn(2+) is required as a cofactor.

The enzyme catalyses beta-alanine + L-histidine + ATP = carnosine + ADP + phosphate + H(+). The catalysed reaction is 4-aminobutanoate + L-histidine + ATP = L-homocarnosine + ADP + phosphate + H(+). Its function is as follows. Catalyzes the synthesis of carnosine and homocarnosine. Carnosine is synthesized more efficiently than homocarnosine. The sequence is that of Carnosine synthase 1 from Homo sapiens (Human).